A 213-amino-acid polypeptide reads, in one-letter code: ATP phosphoribosyltransferase (213 aa).

The protein belongs to the ATP phosphoribosyltransferase family. Short subfamily. In terms of assembly, heteromultimer composed of HisG and HisZ subunits.

It localises to the cytoplasm. The enzyme catalyses 1-(5-phospho-beta-D-ribosyl)-ATP + diphosphate = 5-phospho-alpha-D-ribose 1-diphosphate + ATP. It participates in amino-acid biosynthesis; L-histidine biosynthesis; L-histidine from 5-phospho-alpha-D-ribose 1-diphosphate: step 1/9. Catalyzes the condensation of ATP and 5-phosphoribose 1-diphosphate to form N'-(5'-phosphoribosyl)-ATP (PR-ATP). Has a crucial role in the pathway because the rate of histidine biosynthesis seems to be controlled primarily by regulation of HisG enzymatic activity. The chain is ATP phosphoribosyltransferase from Saccharophagus degradans (strain 2-40 / ATCC 43961 / DSM 17024).